The sequence spans 274 residues: Large ribosomal subunit protein uL2 (274 aa).

The disordered stretch occupies residues 224-274 (VMNPVDHPHGGGEGRSPIGRNPVTPWGKPALGARTRKKKPGDRLIVKRRAR). Over residues 257 to 274 (RTRKKKPGDRLIVKRRAR) the composition is skewed to basic residues.

Belongs to the universal ribosomal protein uL2 family. As to quaternary structure, part of the 50S ribosomal subunit. Forms a bridge to the 30S subunit in the 70S ribosome.

Its function is as follows. One of the primary rRNA binding proteins. Required for association of the 30S and 50S subunits to form the 70S ribosome, for tRNA binding and peptide bond formation. It has been suggested to have peptidyltransferase activity; this is somewhat controversial. Makes several contacts with the 16S rRNA in the 70S ribosome. The polypeptide is Large ribosomal subunit protein uL2 (Pelotomaculum thermopropionicum (strain DSM 13744 / JCM 10971 / SI)).